A 114-amino-acid chain; its full sequence is MAEQPSRQQILQTQYNSYKSRLQQIAQKIVDLETDADEHKLVMDTLNSMDNNRRCFRMIHGVLVERTVGTVVPILKTTQEGIQTAMNGLLDQYKQLEAEFQKFQKDNKIQVVRQ.

Belongs to the prefoldin subunit beta family. Heterohexamer of two PFD-alpha type and four PFD-beta type subunits.

Binds specifically to cytosolic chaperonin (c-CPN) and transfers target proteins to it. Binds to nascent polypeptide chain and promotes folding in an environment in which there are many competing pathways for nonnative proteins. The protein is Probable prefoldin subunit 2 of Schizosaccharomyces pombe (strain 972 / ATCC 24843) (Fission yeast).